A 714-amino-acid polypeptide reads, in one-letter code: Testis-expressed protein 13D (714 aa).

Disordered stretches follow at residues 300-419 (GSFP…GCSD) and 431-675 (RRCK…PASF). Composition is skewed to basic and acidic residues over residues 307-320 (SRSH…ERSQ) and 366-378 (GNRE…EGPK). A compositionally biased stretch (basic residues) spans 379–392 (RARRMHTLVFRRSH). Polar residues predominate over residues 403–416 (TVPQGDSRSYSQEG). Basic and acidic residues-rich tracts occupy residues 495–505 (CKPEEGPERPQ), 557–567 (CKPEEGPERPQ), and 636–646 (SRSHGVRESPK). A RanBP2-type zinc finger spans residues 677-706 (VPVNWKCPWCKAINFSWRTACYKCKKACVP).

Belongs to the TEX13 family.

The protein is Testis-expressed protein 13D of Homo sapiens (Human).